We begin with the raw amino-acid sequence, 948 residues long: Phosphoenolpyruvate carboxylase (948 aa).

Active-site residues include H138 and K610.

It belongs to the PEPCase type 1 family. The cofactor is Mg(2+).

The catalysed reaction is oxaloacetate + phosphate = phosphoenolpyruvate + hydrogencarbonate. Functionally, forms oxaloacetate, a four-carbon dicarboxylic acid source for the tricarboxylic acid cycle. This Streptococcus gordonii (strain Challis / ATCC 35105 / BCRC 15272 / CH1 / DL1 / V288) protein is Phosphoenolpyruvate carboxylase.